Reading from the N-terminus, the 454-residue chain is Glutamyl-tRNA(Gln) amidotransferase subunit A (454 aa).

Catalysis depends on charge relay system residues Lys77 and Ser152. The active-site Acyl-ester intermediate is Ser176.

This sequence belongs to the amidase family. GatA subfamily. Heterotrimer of A, B and C subunits.

It catalyses the reaction L-glutamyl-tRNA(Gln) + L-glutamine + ATP + H2O = L-glutaminyl-tRNA(Gln) + L-glutamate + ADP + phosphate + H(+). In terms of biological role, allows the formation of correctly charged Gln-tRNA(Gln) through the transamidation of misacylated Glu-tRNA(Gln) in organisms which lack glutaminyl-tRNA synthetase. The reaction takes place in the presence of glutamine and ATP through an activated gamma-phospho-Glu-tRNA(Gln). The polypeptide is Glutamyl-tRNA(Gln) amidotransferase subunit A (gatA) (Methanothermobacter thermautotrophicus (strain ATCC 29096 / DSM 1053 / JCM 10044 / NBRC 100330 / Delta H) (Methanobacterium thermoautotrophicum)).